The sequence spans 930 residues: Protocadherin gamma-B6 (930 aa).

An N-terminal signal peptide occupies residues 1–30 (MGGSCAQRRRAGPRQVLFPLLLPFFYPTLC). 6 Cadherin domains span residues 31–133 (EPIR…APQF), 134–242 (DKKE…PPVF), 243–347 (SRDE…SPEI), 348–452 (IITS…APVF), 453–562 (DQTS…APRV), and 570–675 (DGSA…LPDL). The Extracellular portion of the chain corresponds to 31-691 (EPIRYSIPEE…SDPQAELQFY (661 aa)). N-linked (GlcNAc...) asparagine glycosylation is found at N304, N419, and N545. Residues 692–712 (LVVALALISVLFLLAVILAIA) traverse the membrane as a helical segment. The Cytoplasmic segment spans residues 713–930 (LRLRRSLSPT…KKKSGKKEKK (218 aa)). Disordered stretches follow at residues 791–839 (PHGG…WPNN) and 900–930 (ATLT…KEKK). The span at 800-839 (HPETLTSQAPPNTDWRFSQAQRPGTSGSQNGDDTGTWPNN) shows a compositional bias: polar residues. Residues 920–930 (NKKKSGKKEKK) show a composition bias toward basic residues.

The protein resides in the cell membrane. Potential calcium-dependent cell-adhesion protein. May be involved in the establishment and maintenance of specific neuronal connections in the brain. The protein is Protocadherin gamma-B6 (PCDHGB6) of Pan troglodytes (Chimpanzee).